A 236-amino-acid polypeptide reads, in one-letter code: Phosphoribosylaminoimidazole-succinocarboxamide synthase (236 aa).

The protein belongs to the SAICAR synthetase family.

It catalyses the reaction 5-amino-1-(5-phospho-D-ribosyl)imidazole-4-carboxylate + L-aspartate + ATP = (2S)-2-[5-amino-1-(5-phospho-beta-D-ribosyl)imidazole-4-carboxamido]succinate + ADP + phosphate + 2 H(+). The protein operates within purine metabolism; IMP biosynthesis via de novo pathway; 5-amino-1-(5-phospho-D-ribosyl)imidazole-4-carboxamide from 5-amino-1-(5-phospho-D-ribosyl)imidazole-4-carboxylate: step 1/2. The sequence is that of Phosphoribosylaminoimidazole-succinocarboxamide synthase from Wolinella succinogenes (strain ATCC 29543 / DSM 1740 / CCUG 13145 / JCM 31913 / LMG 7466 / NCTC 11488 / FDC 602W) (Vibrio succinogenes).